A 403-amino-acid polypeptide reads, in one-letter code: Multifunctional CCA protein (403 aa).

ATP contacts are provided by Gly8 and Arg11. CTP contacts are provided by Gly8 and Arg11. Mg(2+)-binding residues include Asp21 and Asp23. The ATP site is built by Arg91, Arg137, and Arg140. CTP contacts are provided by Arg91, Arg137, and Arg140. The region spanning 228-329 is the HD domain; the sequence is TGIHTLMVAK…LKVLGLLDVW (102 aa).

It belongs to the tRNA nucleotidyltransferase/poly(A) polymerase family. Bacterial CCA-adding enzyme type 1 subfamily. In terms of assembly, monomer. Can also form homodimers and oligomers. It depends on Mg(2+) as a cofactor. Ni(2+) serves as cofactor.

It carries out the reaction a tRNA precursor + 2 CTP + ATP = a tRNA with a 3' CCA end + 3 diphosphate. The catalysed reaction is a tRNA with a 3' CCA end + 2 CTP + ATP = a tRNA with a 3' CCACCA end + 3 diphosphate. In terms of biological role, catalyzes the addition and repair of the essential 3'-terminal CCA sequence in tRNAs without using a nucleic acid template. Adds these three nucleotides in the order of C, C, and A to the tRNA nucleotide-73, using CTP and ATP as substrates and producing inorganic pyrophosphate. tRNA 3'-terminal CCA addition is required both for tRNA processing and repair. Also involved in tRNA surveillance by mediating tandem CCA addition to generate a CCACCA at the 3' terminus of unstable tRNAs. While stable tRNAs receive only 3'-terminal CCA, unstable tRNAs are marked with CCACCA and rapidly degraded. This Vibrio cholerae serotype O1 (strain ATCC 39541 / Classical Ogawa 395 / O395) protein is Multifunctional CCA protein.